We begin with the raw amino-acid sequence, 177 residues long: Adenine phosphoribosyltransferase (177 aa).

The protein belongs to the purine/pyrimidine phosphoribosyltransferase family. Homodimer.

It localises to the cytoplasm. The enzyme catalyses AMP + diphosphate = 5-phospho-alpha-D-ribose 1-diphosphate + adenine. The protein operates within purine metabolism; AMP biosynthesis via salvage pathway; AMP from adenine: step 1/1. In terms of biological role, catalyzes a salvage reaction resulting in the formation of AMP, that is energically less costly than de novo synthesis. This Chlorobium phaeobacteroides (strain DSM 266 / SMG 266 / 2430) protein is Adenine phosphoribosyltransferase.